We begin with the raw amino-acid sequence, 33 residues long: Alpha-amanitin proprotein (33 aa).

Residues 1–10 (MSDINATRLP) constitute a propeptide that is removed on maturation. I11 is modified ((3R,4R)-4,5-dihydroxyisoleucine; in form alpha-amanitin). Position 11 is a (3R,4S)-4-hydroxyisoleucine; in form gamma-amanitin (I11). A cross-link (cyclopeptide (Ile-Pro)) is located at residues 11–18 (IWGIGCNP). Residues 12 to 16 (WGIGC) constitute a cross-link (2'-cysteinyl-6'-hydroxytryptophan sulfoxide (Trp-Cys)). Residue P18 is modified to 4-hydroxyproline. Residues 19-33 (SVGDEVTALLASGEA) constitute a propeptide that is removed on maturation.

The protein belongs to the MSDIN fungal toxin family. In terms of processing, processed by the macrocyclase-peptidase enzyme POPB to yield a toxic cyclic decapeptide. POPB first removes 10 residues from the N-terminus. Conformational trapping of the remaining peptide forces the enzyme to release this intermediate rather than proceed to macrocyclization. The enzyme rebinds the remaining peptide in a different conformation and catalyzes macrocyclization of the N-terminal 8 residues.

In terms of biological role, major toxin belonging to the bicyclic octapeptides amatoxins that acts by binding non-competitively to RNA polymerase II and greatly slowing the elongation of transcripts from target promoters. In Amanita rimosa, this protein is Alpha-amanitin proprotein.